The following is a 318-amino-acid chain: Acetyl-coenzyme A carboxylase carboxyl transferase subunit alpha (318 aa).

Positions leucine 39 to aspartate 292 constitute a CoA carboxyltransferase C-terminal domain.

Belongs to the AccA family. As to quaternary structure, acetyl-CoA carboxylase is a heterohexamer composed of biotin carboxyl carrier protein (AccB), biotin carboxylase (AccC) and two subunits each of ACCase subunit alpha (AccA) and ACCase subunit beta (AccD).

It is found in the cytoplasm. The enzyme catalyses N(6)-carboxybiotinyl-L-lysyl-[protein] + acetyl-CoA = N(6)-biotinyl-L-lysyl-[protein] + malonyl-CoA. Its pathway is lipid metabolism; malonyl-CoA biosynthesis; malonyl-CoA from acetyl-CoA: step 1/1. Its function is as follows. Component of the acetyl coenzyme A carboxylase (ACC) complex. First, biotin carboxylase catalyzes the carboxylation of biotin on its carrier protein (BCCP) and then the CO(2) group is transferred by the carboxyltransferase to acetyl-CoA to form malonyl-CoA. This is Acetyl-coenzyme A carboxylase carboxyl transferase subunit alpha from Gluconacetobacter diazotrophicus (strain ATCC 49037 / DSM 5601 / CCUG 37298 / CIP 103539 / LMG 7603 / PAl5).